The primary structure comprises 476 residues: FAD-dependent monooxygenase prhF (476 aa).

Positions 41, 55, and 114 each coordinate FAD. Residue Tyr222 is part of the active site. Residues Asp314 and Ala327 each contribute to the FAD site. An N-linked (GlcNAc...) asparagine glycan is attached at Asn343. A helical transmembrane segment spans residues 447-467 (LGSTPIQMLTLLLPCLFYFMY). N-linked (GlcNAc...) asparagine glycosylation occurs at Asn471.

The protein belongs to the paxM FAD-dependent monooxygenase family. Requires FAD as cofactor.

The protein localises to the membrane. The protein operates within secondary metabolite biosynthesis; terpenoid biosynthesis. Its function is as follows. FAD-dependent monooxygenase; part of the gene cluster that mediates the biosynthesis of paraherquonin, a meroterpenoid with a unique, highly congested hexacyclic molecular architecture. The first step of the pathway is the synthesis of 3,5-dimethylorsellinic acid (DMOA) by the polyketide synthase prhL. Synthesis of DMOA is followed by farnesylation by the prenyltransferase prhE, methylesterification by the methyl-transferase prhM, epoxidation of the prenyl chain by the flavin-dependent monooxygenase prhF, and cyclization of the farnesyl moiety by the terpene cyclase prhH, to yield the tetracyclic intermediate, protoaustinoid A. The short chain dehydrogenase prhI then oxidizes the C-3 alcohol group of the terpene cyclase product to transform protoaustinoid A into protoaustinoid B. The FAD-binding monooxygenase prhJ catalyzes the oxidation of protoaustinoid B into preaustinoid A which is further oxidized into preaustinoid A1 by FAD-binding monooxygenase phrK. Finally, prhA leads to berkeleydione via the berkeleyone B intermediate. PrhA is a multifunctional dioxygenase that first desaturates at C5-C6 to form berkeleyone B, followed by rearrangement of the A/B-ring to form the cycloheptadiene moiety in berkeleydione. Berkeleydione serves as the key intermediate for the biosynthesis of paraherquonin as well as many other meroterpenoids. The cytochrome P450 monooxygenases prhB, prhD, and prhN, as well as the isomerase prhC, are probably involved in the late stage of paraherquonin biosynthesis, after the production of berkeleydione. Especially prhC might be a multifunctional enzyme that catalyzes the D-ring expansion via intramolecular methoxy rearrangement, as well as the hydrolysis of the expanded D-ring. The polypeptide is FAD-dependent monooxygenase prhF (Penicillium brasilianum).